Reading from the N-terminus, the 356-residue chain is DNA polymerase IV (356 aa).

A UmuC domain is found at 1 to 188; it reads MDTSRKIIHI…IPVTKFYGVG (188 aa). Mg(2+) is bound by residues D11 and D106. E107 is a catalytic residue.

Belongs to the DNA polymerase type-Y family. As to quaternary structure, monomer. Mg(2+) is required as a cofactor.

The protein resides in the cytoplasm. It catalyses the reaction DNA(n) + a 2'-deoxyribonucleoside 5'-triphosphate = DNA(n+1) + diphosphate. Its function is as follows. Poorly processive, error-prone DNA polymerase involved in untargeted mutagenesis. Copies undamaged DNA at stalled replication forks, which arise in vivo from mismatched or misaligned primer ends. These misaligned primers can be extended by PolIV. Exhibits no 3'-5' exonuclease (proofreading) activity. May be involved in translesional synthesis, in conjunction with the beta clamp from PolIII. This Listeria innocua serovar 6a (strain ATCC BAA-680 / CLIP 11262) protein is DNA polymerase IV.